A 498-amino-acid chain; its full sequence is Cytochrome P450 monooxygenase 71 (498 aa).

Residues 7 to 24 form a helical membrane-spanning segment; it reads YVFALLGILATLYFVRWS. An N-linked (GlcNAc...) asparagine glycan is attached at asparagine 425. Cysteine 440 lines the heme pocket.

Belongs to the cytochrome P450 family. It depends on heme as a cofactor.

It is found in the membrane. It functions in the pathway secondary metabolite biosynthesis. Its function is as follows. Cytochrome P450 monooxygenase that is able to use dehydroabietic acid and testosterone as substrates for oxidation, suggesting that the natural substrate(s) may be structurally related to steroid compounds. This is Cytochrome P450 monooxygenase 71 from Postia placenta (strain ATCC 44394 / Madison 698-R) (Brown rot fungus).